The following is a 504-amino-acid chain: MSVIRADEVLESLNKQIEEFQVSANLEEVGTVIQVGDGVARIYGLEKAMMGEMLEFESGIVGVVFNLEEDNVGAVLLGSDVAVREGSIVKRTGKILSVPVGKGLLGRVVDGLGNPIDGKGPLTDIAYYSPVEKIAPGVVKRKSVHEPLQTGIKAIDAMIPIGRGQRELIIGDRATGKTTIAIDTILNQKGQGVYCIYVAIGQKRANVVHIVETLQKHGAMEYTTVVAATSSDPATMQYIAPFVGCTIGEYFRDNGMHALVIYDDLTKHAYAYRQLSLLLRRPPGREAYPGDVFYLHSRLLERAAKLNDELGAGSLTALPIIETQAGDVAAYIPTNVISITDGQIFLEADLFYKGIRPAINAGISVSRVGGAAQIKAMKQVAGTLRLDLAQYRELEAFVQFASELDKATQAQIARGQRMVELLKQPPNQPVPVEKQVAIIYVAGQGYLDDVSVNAIQKFEKEFYVFLDTEKPDILEAIRREKALTDDIKAKLDAAVKEFKQKVAF.

171–178 contributes to the ATP binding site; sequence GDRATGKT.

It belongs to the ATPase alpha/beta chains family. F-type ATPases have 2 components, CF(1) - the catalytic core - and CF(0) - the membrane proton channel. CF(1) has five subunits: alpha(3), beta(3), gamma(1), delta(1), epsilon(1). CF(0) has three main subunits: a(1), b(2) and c(9-12). The alpha and beta chains form an alternating ring which encloses part of the gamma chain. CF(1) is attached to CF(0) by a central stalk formed by the gamma and epsilon chains, while a peripheral stalk is formed by the delta and b chains.

It is found in the cell inner membrane. It carries out the reaction ATP + H2O + 4 H(+)(in) = ADP + phosphate + 5 H(+)(out). In terms of biological role, produces ATP from ADP in the presence of a proton gradient across the membrane. The alpha chain is a regulatory subunit. The polypeptide is ATP synthase subunit alpha (Sulfurihydrogenibium sp. (strain YO3AOP1)).